Reading from the N-terminus, the 194-residue chain is Peptidyl-tRNA hydrolase (194 aa).

TRNA is bound at residue Tyr17. His22 serves as the catalytic Proton acceptor. The tRNA site is built by Tyr68, Asn70, and Asn116.

Belongs to the PTH family. As to quaternary structure, monomer.

It is found in the cytoplasm. The catalysed reaction is an N-acyl-L-alpha-aminoacyl-tRNA + H2O = an N-acyl-L-amino acid + a tRNA + H(+). In terms of biological role, hydrolyzes ribosome-free peptidyl-tRNAs (with 1 or more amino acids incorporated), which drop off the ribosome during protein synthesis, or as a result of ribosome stalling. Its function is as follows. Catalyzes the release of premature peptidyl moieties from peptidyl-tRNA molecules trapped in stalled 50S ribosomal subunits, and thus maintains levels of free tRNAs and 50S ribosomes. The protein is Peptidyl-tRNA hydrolase of Pseudoalteromonas translucida (strain TAC 125).